The following is a 246-amino-acid chain: Uridylate kinase (246 aa).

Position 10–13 (Lys-10–Gly-13) interacts with ATP. Position 52 (Gly-52) interacts with UMP. Positions 53 and 57 each coordinate ATP. UMP is bound by residues Asp-72 and Thr-133–Thr-140. Residues Thr-160, Tyr-166, and Asp-169 each contribute to the ATP site.

It belongs to the UMP kinase family. As to quaternary structure, homohexamer.

The protein localises to the cytoplasm. It catalyses the reaction UMP + ATP = UDP + ADP. The protein operates within pyrimidine metabolism; CTP biosynthesis via de novo pathway; UDP from UMP (UMPK route): step 1/1. Inhibited by UTP. Its function is as follows. Catalyzes the reversible phosphorylation of UMP to UDP. The sequence is that of Uridylate kinase from Halorhodospira halophila (strain DSM 244 / SL1) (Ectothiorhodospira halophila (strain DSM 244 / SL1)).